The chain runs to 103 residues: Integration host factor subunit beta (103 aa).

Positions 62–81 are disordered; it reads RNPKTGESVALPGKHVPHFK.

Belongs to the bacterial histone-like protein family. As to quaternary structure, heterodimer of an alpha and a beta chain.

In terms of biological role, this protein is one of the two subunits of integration host factor, a specific DNA-binding protein that functions in genetic recombination as well as in transcriptional and translational control. The protein is Integration host factor subunit beta of Xanthomonas campestris pv. campestris (strain B100).